A 418-amino-acid polypeptide reads, in one-letter code: Glycine betaine transport ATP-binding protein OpuAA (418 aa).

One can recognise an ABC transporter domain in the interval 34–270 (KTKKEILKAT…PSNEYVEKFV (237 aa)). Position 66–73 (66–73 (GLSGSGKS)) interacts with ATP. CBS domains are found at residues 284-340 (IMKR…DLSL) and 344-403 (LNTE…INAE).

The protein belongs to the ABC transporter superfamily. As to quaternary structure, the complex is composed of two ATP-binding proteins (OpuAA), two transmembrane proteins (OpuAB) and a solute-binding protein (OpuAC).

It catalyses the reaction a quaternary ammonium(out) + ATP + H2O = a quaternary ammonium(in) + ADP + phosphate + H(+). Functionally, involved in a multicomponent binding-protein-dependent transport system for glycine betaine. Probably responsible for energy coupling to the transport system. The chain is Glycine betaine transport ATP-binding protein OpuAA (opuAA) from Bacillus subtilis (strain 168).